A 252-amino-acid chain; its full sequence is 5'-nucleotidase SurE (252 aa).

Asp-8, Asp-9, Ser-39, and Asn-95 together coordinate a divalent metal cation.

It belongs to the SurE nucleotidase family. Requires a divalent metal cation as cofactor.

It localises to the cytoplasm. The enzyme catalyses a ribonucleoside 5'-phosphate + H2O = a ribonucleoside + phosphate. In terms of biological role, nucleotidase that shows phosphatase activity on nucleoside 5'-monophosphates. This Clostridium botulinum (strain Okra / Type B1) protein is 5'-nucleotidase SurE.